Consider the following 406-residue polypeptide: Arginine biosynthesis bifunctional protein ArgJ (406 aa).

Substrate is bound by residues Thr-152, Lys-179, Thr-190, Glu-277, Asn-401, and Ser-406. Thr-190 functions as the Nucleophile in the catalytic mechanism.

Belongs to the ArgJ family. As to quaternary structure, heterotetramer of two alpha and two beta chains.

It localises to the cytoplasm. It carries out the reaction N(2)-acetyl-L-ornithine + L-glutamate = N-acetyl-L-glutamate + L-ornithine. It catalyses the reaction L-glutamate + acetyl-CoA = N-acetyl-L-glutamate + CoA + H(+). It participates in amino-acid biosynthesis; L-arginine biosynthesis; L-ornithine and N-acetyl-L-glutamate from L-glutamate and N(2)-acetyl-L-ornithine (cyclic): step 1/1. It functions in the pathway amino-acid biosynthesis; L-arginine biosynthesis; N(2)-acetyl-L-ornithine from L-glutamate: step 1/4. Catalyzes two activities which are involved in the cyclic version of arginine biosynthesis: the synthesis of N-acetylglutamate from glutamate and acetyl-CoA as the acetyl donor, and of ornithine by transacetylation between N(2)-acetylornithine and glutamate. The sequence is that of Arginine biosynthesis bifunctional protein ArgJ from Neisseria gonorrhoeae (strain ATCC 700825 / FA 1090).